The primary structure comprises 531 residues: MVDVGKWPIFTLLSPQEIASIRKACVFGTSASEALYVTDNDEVFVFGLNYSNCLGTGDNQSTLVPKKLEGLCGKKIKSLSYGSGPHVLLSTEDGVVYAWGHNGYSQLGNGTTNQGIAPVQVCTNLLIKQVVEVACGSHHSMALAADGEVFAWGYNNCGQVGSGSTANQPTPRKVTNCLHIKRVVGIACGQTSSMAVLDNGEVYGWGYNGNGQLGLGNNGNQLTPVRVAALHSVCVNQIVCGYAHTLALTDEGLLYAWGANTYGQLGTGNKNNLLSPAHIMVEKERVVEIAACHSAHTSAAKTQGGHVYMWGQCRGQSVILPHLTHFSCTDDVFACFATPAVSWRLLSVEHEDFLTVAESLKKEFDSPETADLKFRIDGKYIHVHKAVLKIRCEHFRSMFQSYWNEDMKEVIEIDQFSYPVYRAFLQYLYTDTVDLPPEDAIGLLDLATSYCENRLKKLCQHIIKRGITVENAFSLFSAAVRYDAEDLEEFCFKFCINHLTEVTQTAAFWQMDGPLLKEFIAKASKCGAFKN.

RCC1 repeat units follow at residues 40-91 (NDEV…LLST), 93-145 (DGVV…ALAA), 147-198 (GEVF…AVLD), 199-250 (NGEV…ALTD), 252-302 (GLLY…AAKT), and 304-356 (GGHV…FLTV). BTB domains lie at 370–437 (ADLK…DLPP) and 470–499 (ENAFSLFSAAVRYDAEDLEEFCFKFCINHL).

Ubiquitously expressed. In the retina, present in the nerve fiber layer and to a lesser extent in the inner and outer plexiform layers (at protein level).

The protein resides in the nucleus. Functionally, may be involved in cell cycle regulation by chromatin remodeling. This Homo sapiens (Human) protein is RCC1 and BTB domain-containing protein 1 (RCBTB1).